The sequence spans 809 residues: uncharacterized protein (809 aa).

An MHYT domain is found at 19 to 206; it reads HDLRLVLVAS…FTGMSAITIV (188 aa). 7 helical membrane passes run 23–43, 57–77, 92–112, 122–142, 152–172, 186–206, and 224–244; these read LVLV…RLYS, LLLT…IAMV, TLLS…VASA, GGVL…SAFV, ATVG…LLLA, GMLC…ITIV, and TLAV…AVAI. The region spanning 254–317 is the PAS domain; that stretch reads ERIRRLANAA…ADPSREDVRR (64 aa). A GGDEF domain is found at 402–536; sequence ESLAVICIDL…GRGVYRFFKR (135 aa). Residues 545–795 form the EAL domain; it reads RRNLARDLRQ…ALTMWTTAGD (251 aa).

The protein localises to the cell membrane. This is an uncharacterized protein from Caulobacter vibrioides (strain ATCC 19089 / CIP 103742 / CB 15) (Caulobacter crescentus).